The primary structure comprises 1125 residues: Transient receptor potential cation channel subfamily A member 1 (1125 aa).

Residues 1-721 are Cytoplasmic-facing; it reads MKRGLRRILL…KWCAYGFRAH (721 aa). 9 ANK repeats span residues 63–94, 98–127, 131–161, 165–194, 198–227, 239–268, 272–301, 309–338, and 342–371; these read ENLC…VLNI, YGNT…NPNL, NMMS…NINL, NGNT…KLCK, WGDY…KNGY, KKAS…HIDM, AKCM…GSSD, NQET…DINS, and EGRS…KVDI. Intrachain disulfides connect cysteine 193-cysteine 666, cysteine 463-cysteine 666, cysteine 609-cysteine 622, cysteine 622-cysteine 666, and cysteine 634-cysteine 859. Proline 395 is subject to 4-hydroxyproline; transient. 5 ANK repeats span residues 413–442, 446–475, 482–511, 514–543, and 548–577; these read DGCT…SIHS, DKKS…DTRL, HGMT…LFLS, NGWT…KCTD, and EGNT…DILL. (E)-cinnamaldehyde contacts are provided by cysteine 415 and cysteine 422. Cysteine 622 serves as a coordination point for (E)-cinnamaldehyde. The residue at position 634 (cysteine 634) is a Cysteine sulfenic acid (-SOH); transient; in hyperoxia. (E)-cinnamaldehyde is bound by residues cysteine 642, cysteine 666, and lysine 712. A helical membrane pass occupies residues 722-742; sequence MMNLGSYCLGLIPMTLLVVKI. At 743-767 the chain is on the extracellular side; that stretch reads QPGMAFNSTGIINGTSSTHEERIDT. N-linked (GlcNAc...) asparagine glycosylation is found at asparagine 749 and asparagine 755. The helical transmembrane segment at 768 to 788 threads the bilayer; it reads LNSFPIKICMILVFLSSIFGY. Topologically, residues 789-806 are cytoplasmic; it reads CKEVIQIFQQKRNYFLDY. Glutamate 791, glutamine 794, asparagine 808, and glutamate 811 together coordinate Ca(2+). A helical transmembrane segment spans residues 807–827; that stretch reads NNALEWVIYTTSIIFVLPLFL. At 828 to 832 the chain is on the extracellular side; it reads NIPAY. The helical transmembrane segment at 833–853 threads the bilayer; sequence MQWQCGAIAIFFYWMNFLLYL. Residues 854–876 are Cytoplasmic-facing; it reads QRFENCGIFIVMLEVIFKTLLRS. Position 859 is a cysteine sulfenic acid (-SOH); transient; in hyperoxia (cysteine 859). The helical transmembrane segment at 877-897 threads the bilayer; sequence TGVFIFLLLAFGLSFYVLLNF. Residues 898 to 904 lie on the Extracellular side of the membrane; that stretch reads QDAFSTP. Positions 905 to 925 form an intramembrane region, pore-forming; that stretch reads LLSLIQTFSMMLGDINYRDAF. The Extracellular segment spans residues 926–937; sequence LEPLFRNELAYP. The chain crosses the membrane as a helical span at residues 938 to 959; that stretch reads VLTFGQLIAFTMFVPIVLMNLL. The Cytoplasmic segment spans residues 960–1125; it reads IGLAVGDIAE…THCSISHPDF (166 aa). Residues 1044 to 1073 are a coiled coil; sequence MEILKQKYRLKDLTSLLEKQHELIKLIIQK. 1048-1054 is a binding site for a 1,2-diacyl-sn-glycero-3-phospho-(1D-myo-inositol); the sequence is KQKYRLK.

The protein belongs to the transient receptor (TC 1.A.4) family. As to quaternary structure, homotetramer. Interacts with TMEM100. Interacts with EGLN1. Interacts with the scorpion wasabi receptor toxin at the same site that electrophiles but in a non-covalent manner. In terms of processing, TRPA1 activation by electrophiles occurs though covalent modification of specific cysteine residues in the N-terminal cytoplasmic domain. Post-translationally, hydroxylation is required for TRPA1 activity inhibition in normoxia. In hypoxia, the decrease in oxygen concentration diminishes the activity of the hydroxylase EGLN1, thus relieving TRPA1 from inhibition and ultimately leading to channel activation. Oxidation of Cys-634 and Cys-859 in hyperoxia may override the hydroxylase EGLN1-mediated inhibition, causing TRPA1 activation. Expressed in inner ear (at protein level). Specifically expressed in a subset of nociceptive neurons. Expressed in the same neurons that TRPV1. In contrast, it is not expressed in neurons expressing TRPM8. Expressed in the superior cervical ganglion of vagus nerve. Expressed in the inferior ganglion (nodose ganglion) of vagus nerve. Expressed in dorsal root ganglia neurons.

The protein resides in the cell membrane. The enzyme catalyses Ca(2+)(in) = Ca(2+)(out). The catalysed reaction is Mg(2+)(in) = Mg(2+)(out). It carries out the reaction Na(+)(in) = Na(+)(out). It catalyses the reaction K(+)(in) = K(+)(out). The enzyme catalyses Zn(2+)(in) = Zn(2+)(out). Electrophilic ligands activate the channel by covalent modification of intracellular cysteines. Cys-622 plays a key role in covalent binding of electrophiles. Extracellular Ca(2+) both potentiates and inactivates TRPA1; a rapid potentiation follows by slow desensitization. Activated by increase in intracellular Ca(2+) concentration. Inhibited by the potent blocker of TRPV channels ruthenium red, A-967079. Activated by icilin, sulfhydryl reactive agent MTSEA, N-methyl maleimide (NMM), and PF-4840154. Also activated by hyperoxia. Activated by intracellular Zn(2+). TRPA1 activation may critically depend on the presence of small intracellular compounds such as polyphosphates. Its function is as follows. Ligand-activated Ca(2+)-permeable, nonselective cation channel. Involved in pain detection and possibly also in cold perception, oxygen concentration perception, cough, itch, and inner ear function. Has a relatively high Ca(2+) selectivity, with a preference for divalent over monovalent cations (Ca(2+) &gt; Ba(2+) &gt; Mg(2+) &gt; NH4(+) &gt; Li(+) &gt; K(+)), the influx of cation into the cytoplasm, leads to membrane depolarization. Has a central role in the pain response to endogenous inflammatory mediators, such as bradykinin and to a diverse array of irritants. Activated by a large variety of structurally unrelated electrophilic and non-electrophilic chemical compounds, such as allylthiocyanate (AITC) from mustard oil or wasabi, cinnamaldehyde, diallyl disulfide (DADS) from garlic, and acrolein, an environmental irritant. Electrophilic ligands activate TRPA1 by interacting with critical N-terminal Cys residues in a covalent manner. Non-electrophile agonists bind at distinct sites in the transmembrane domain to promote channel activation. Also acts as an ionotropic cannabinoid receptor by being activated by delta(9)-tetrahydrocannabinol (THC), the psychoactive component of marijuana. May be a component for the mechanosensitive transduction channel of hair cells in inner ear, thereby participating in the perception of sounds. The sequence is that of Transient receptor potential cation channel subfamily A member 1 from Mus musculus (Mouse).